The following is a 442-amino-acid chain: Putative neutral sphingomyelinase (442 aa).

Residue E46 coordinates Mg(2+). Catalysis depends on H264, which acts as the Proton acceptor. The segment at 309–330 (ALTGEDDQSSQHQPEIQCNGSS) is disordered. Residues 318–330 (SQHQPEIQCNGSS) are compositionally biased toward polar residues. Transmembrane regions (helical) follow at residues 362-384 (RILY…EFTA) and 391-413 (IFLL…ASIW).

Belongs to the neutral sphingomyelinase family.

It localises to the membrane. The enzyme catalyses a sphingomyelin + H2O = phosphocholine + an N-acylsphing-4-enine + H(+). It participates in lipid metabolism; sphingolipid metabolism. The polypeptide is Putative neutral sphingomyelinase (Drosophila melanogaster (Fruit fly)).